A 256-amino-acid chain; its full sequence is Ribonuclease HII (256 aa).

An RNase H type-2 domain is found at 73 to 256; that stretch reads KLIAGIDEAG…RVSFTKNFIV (184 aa). The a divalent metal cation site is built by D79, E80, and D171.

It belongs to the RNase HII family. It depends on Mn(2+) as a cofactor. The cofactor is Mg(2+).

The protein localises to the cytoplasm. The catalysed reaction is Endonucleolytic cleavage to 5'-phosphomonoester.. Its function is as follows. Endonuclease that specifically degrades the RNA of RNA-DNA hybrids. The sequence is that of Ribonuclease HII from Acetivibrio thermocellus (strain ATCC 27405 / DSM 1237 / JCM 9322 / NBRC 103400 / NCIMB 10682 / NRRL B-4536 / VPI 7372) (Clostridium thermocellum).